The following is a 50-amino-acid chain: Thrombin-like enzyme BpirSP27 (50 aa).

A Peptidase S1 domain is found at 1-50; it reads VVGGDECNINEHRSLVAIFNSTGFFCSGILLNQEWVLTASHCDSTNFQMK. A glycan (N-linked (GlcNAc...) asparagine) is linked at Asn20. Cys26 and Cys42 are oxidised to a cystine. The Charge relay system role is filled by His41.

Belongs to the peptidase S1 family. Snake venom subfamily. As to quaternary structure, monomer. Post-translationally, N-glycosylated. In terms of tissue distribution, expressed by the venom gland.

Its subcellular location is the secreted. With respect to regulation, inhibited by serine protease inhibitors PMSF, benzamidine, leupeptin and aprotinin, as well as by copper (Cu2+) and manganese (Mn2+) ions. Not inhibited by metalloprotease inhibitors EDTA, EGTA and 1,10-phenanthroline, as well as by barium (Ba2+) and calcium ion (Ca2+). Functionally, snake venom serine protease that interferes with the hemostatic system of the prey. It preferentially degrades the Bbeta chain (FGB) of fibrinogen, with minor effects on the Aalpha chain (FGA). It presents a lower ability to degrade fibrin clots than BpirSP41. It hydrolyzes chromogenic substrates S-2238 (used for testing thrombin activity), S-2222 (factor Xa), S-2266 (glandular kallikrein and factor XIa), S-2302 (plasma kallikrein, factor XIa and XIIa), and S-2251 (plasmin). It shows a decrease in the clotting time of human plasma in the presence of increasing doses of the enzyme. Its minimum coagulant dose (MCD) is 3.5 ug. It also promotes platelet aggregation in a concentration-dependent manner in the presence or absence of calcium. It also shows 20% inhibition of the hemolytic activity promoted by the complement pathways and possess only a minor role in the induction of edema and pain in rat. The sequence is that of Thrombin-like enzyme BpirSP27 from Bothrops pirajai (Piraja's lancehead).